An 871-amino-acid polypeptide reads, in one-letter code: Protein translocase subunit SecA (871 aa).

ATP is bound by residues glutamine 80, 98 to 102 (GEGKT), and aspartate 537.

The protein belongs to the SecA family. As to quaternary structure, monomer and homodimer. Part of the essential Sec protein translocation apparatus which comprises SecA, SecYEG and auxiliary proteins SecDF. Other proteins may also be involved. A single SecA monomer interacts with SecY in the channel.

The protein localises to the cell inner membrane. It is found in the cytoplasm. The enzyme catalyses ATP + H2O + cellular proteinSide 1 = ADP + phosphate + cellular proteinSide 2.. Functionally, part of the Sec protein translocase complex. Interacts with the SecYEG preprotein conducting channel. Has a central role in coupling the hydrolysis of ATP to the transfer of proteins into and across the cell membrane, serving as an ATP-driven molecular motor driving the stepwise translocation of polypeptide chains across the membrane. This is Protein translocase subunit SecA from Thermotoga maritima (strain ATCC 43589 / DSM 3109 / JCM 10099 / NBRC 100826 / MSB8).